We begin with the raw amino-acid sequence, 251 residues long: L-ascorbate peroxidase 2, cytosolic (251 aa).

The active-site Proton acceptor is the His43. Residue His163 participates in heme b binding. Residues Thr164, Thr180, Asn182, Ile185, and Asp187 each coordinate K(+).

Belongs to the peroxidase family. Ascorbate peroxidase subfamily. Heme b is required as a cofactor. Detected in bundle sheath cells, the photosynthetic cells that surround the phloem and xylem.

The protein localises to the cytoplasm. The enzyme catalyses L-ascorbate + H2O2 = L-dehydroascorbate + 2 H2O. Functionally, plays a key role in hydrogen peroxide removal. The sequence is that of L-ascorbate peroxidase 2, cytosolic from Arabidopsis thaliana (Mouse-ear cress).